We begin with the raw amino-acid sequence, 282 residues long: NADPH-dependent 7-cyano-7-deazaguanine reductase (282 aa).

A substrate-binding site is contributed by 88 to 90; it reads IES. An NADPH-binding site is contributed by 90–91; sequence SK. The active-site Thioimide intermediate is cysteine 190. Aspartate 197 (proton donor) is an active-site residue. Residue 229–230 coordinates substrate; that stretch reads HE. 258-259 is an NADPH binding site; sequence RG.

Belongs to the GTP cyclohydrolase I family. QueF type 2 subfamily. As to quaternary structure, homodimer.

It is found in the cytoplasm. It carries out the reaction 7-aminomethyl-7-carbaguanine + 2 NADP(+) = 7-cyano-7-deazaguanine + 2 NADPH + 3 H(+). The protein operates within tRNA modification; tRNA-queuosine biosynthesis. Its function is as follows. Catalyzes the NADPH-dependent reduction of 7-cyano-7-deazaguanine (preQ0) to 7-aminomethyl-7-deazaguanine (preQ1). The protein is NADPH-dependent 7-cyano-7-deazaguanine reductase of Escherichia coli O17:K52:H18 (strain UMN026 / ExPEC).